Reading from the N-terminus, the 233-residue chain is 2,3,4,5-tetrahydropyridine-2,6-dicarboxylate N-acetyltransferase (233 aa).

Belongs to the transferase hexapeptide repeat family. DapH subfamily.

The catalysed reaction is (S)-2,3,4,5-tetrahydrodipicolinate + acetyl-CoA + H2O = L-2-acetamido-6-oxoheptanedioate + CoA. Its pathway is amino-acid biosynthesis; L-lysine biosynthesis via DAP pathway; LL-2,6-diaminopimelate from (S)-tetrahydrodipicolinate (acetylase route): step 1/3. In terms of biological role, catalyzes the transfer of an acetyl group from acetyl-CoA to tetrahydrodipicolinate. The polypeptide is 2,3,4,5-tetrahydropyridine-2,6-dicarboxylate N-acetyltransferase (Enterococcus faecalis (strain ATCC 700802 / V583)).